The chain runs to 285 residues: Polyamine aminopropyltransferase (285 aa).

The region spanning 5–241 (DNWYIEHFQP…GWWSVTMASK (237 aa)) is the PABS domain. Gln35 is a binding site for S-methyl-5'-thioadenosine. Positions 66 and 90 each coordinate spermidine. S-methyl-5'-thioadenosine contacts are provided by residues Asp110 and 141 to 142 (DG). Asp160 functions as the Proton acceptor in the catalytic mechanism. 160–163 (DSTD) is a spermidine binding site. Pro167 is a binding site for S-methyl-5'-thioadenosine.

It belongs to the spermidine/spermine synthase family. As to quaternary structure, homodimer or homotetramer.

It is found in the cytoplasm. The catalysed reaction is S-adenosyl 3-(methylsulfanyl)propylamine + putrescine = S-methyl-5'-thioadenosine + spermidine + H(+). It functions in the pathway amine and polyamine biosynthesis; spermidine biosynthesis; spermidine from putrescine: step 1/1. Catalyzes the irreversible transfer of a propylamine group from the amino donor S-adenosylmethioninamine (decarboxy-AdoMet) to putrescine (1,4-diaminobutane) to yield spermidine. The sequence is that of Polyamine aminopropyltransferase from Xanthomonas axonopodis pv. citri (strain 306).